The following is a 79-amino-acid chain: Small ribosomal subunit protein bS18 (79 aa).

It belongs to the bacterial ribosomal protein bS18 family. In terms of assembly, part of the 30S ribosomal subunit. Forms a tight heterodimer with protein bS6.

Binds as a heterodimer with protein bS6 to the central domain of the 16S rRNA, where it helps stabilize the platform of the 30S subunit. This Streptococcus pyogenes serotype M49 (strain NZ131) protein is Small ribosomal subunit protein bS18.